A 325-amino-acid polypeptide reads, in one-letter code: Elongation factor P--(R)-beta-lysine ligase (325 aa).

76–78 (SPE) contacts substrate. Residues 100-102 (RNE) and asparagine 109 each bind ATP. Tyrosine 118 is a substrate binding site. Position 244 to 245 (244 to 245 (EL)) interacts with ATP. Substrate is bound at residue glutamate 251. Glycine 300 is a binding site for ATP.

It belongs to the class-II aminoacyl-tRNA synthetase family. EpmA subfamily. In terms of assembly, homodimer.

The catalysed reaction is D-beta-lysine + L-lysyl-[protein] + ATP = N(6)-((3R)-3,6-diaminohexanoyl)-L-lysyl-[protein] + AMP + diphosphate + H(+). With EpmB is involved in the beta-lysylation step of the post-translational modification of translation elongation factor P (EF-P). Catalyzes the ATP-dependent activation of (R)-beta-lysine produced by EpmB, forming a lysyl-adenylate, from which the beta-lysyl moiety is then transferred to the epsilon-amino group of a conserved specific lysine residue in EF-P. This is Elongation factor P--(R)-beta-lysine ligase from Edwardsiella ictaluri (strain 93-146).